We begin with the raw amino-acid sequence, 79 residues long: Cell division protein ZapB (79 aa).

Residues 4–78 (EVFEKLEAKV…LRALLGKMEE (75 aa)) adopt a coiled-coil conformation.

This sequence belongs to the ZapB family. In terms of assembly, homodimer. The ends of the coiled-coil dimer bind to each other, forming polymers. Interacts with FtsZ.

Its subcellular location is the cytoplasm. Non-essential, abundant cell division factor that is required for proper Z-ring formation. It is recruited early to the divisome by direct interaction with FtsZ, stimulating Z-ring assembly and thereby promoting cell division earlier in the cell cycle. Its recruitment to the Z-ring requires functional FtsA or ZipA. The chain is Cell division protein ZapB from Pectobacterium carotovorum subsp. carotovorum (strain PC1).